Consider the following 276-residue polypeptide: Dermonecrotic toxin Ls4SicTox-alphaIII1i (276 aa).

His-3 is a catalytic residue. Glu-23 and Asp-25 together coordinate Mg(2+). His-38 (nucleophile) is an active-site residue. A disulfide bond links Cys-42 and Cys-48. Asp-82 lines the Mg(2+) pocket.

It belongs to the arthropod phospholipase D family. Class I subfamily. It depends on Mg(2+) as a cofactor. Expressed by the venom gland.

The protein resides in the secreted. It carries out the reaction an N-(acyl)-sphingosylphosphocholine = an N-(acyl)-sphingosyl-1,3-cyclic phosphate + choline. It catalyses the reaction an N-(acyl)-sphingosylphosphoethanolamine = an N-(acyl)-sphingosyl-1,3-cyclic phosphate + ethanolamine. The catalysed reaction is a 1-acyl-sn-glycero-3-phosphocholine = a 1-acyl-sn-glycero-2,3-cyclic phosphate + choline. The enzyme catalyses a 1-acyl-sn-glycero-3-phosphoethanolamine = a 1-acyl-sn-glycero-2,3-cyclic phosphate + ethanolamine. In terms of biological role, dermonecrotic toxins cleave the phosphodiester linkage between the phosphate and headgroup of certain phospholipids (sphingolipid and lysolipid substrates), forming an alcohol (often choline) and a cyclic phosphate. This toxin acts on sphingomyelin (SM). It may also act on ceramide phosphoethanolamine (CPE), lysophosphatidylcholine (LPC) and lysophosphatidylethanolamine (LPE), but not on lysophosphatidylserine (LPS), and lysophosphatidylglycerol (LPG). It acts by transphosphatidylation, releasing exclusively cyclic phosphate products as second products. Induces dermonecrosis, hemolysis, increased vascular permeability, edema, inflammatory response, and platelet aggregation. This is Dermonecrotic toxin Ls4SicTox-alphaIII1i from Loxosceles sp. (strain 4 GJB-2008) (Recluse spider).